We begin with the raw amino-acid sequence, 307 residues long: F-box protein At2g23160 (307 aa).

The 48-residue stretch at 2–49 (NSSSPISIDLIAEILSRVPSKSVARFRCVSKPWASMIRRPYFTELFLT) folds into the F-box domain.

This is F-box protein At2g23160 from Arabidopsis thaliana (Mouse-ear cress).